A 506-amino-acid chain; its full sequence is Maturase K (506 aa).

This sequence belongs to the intron maturase 2 family. MatK subfamily.

It localises to the plastid. Its subcellular location is the chloroplast. In terms of biological role, usually encoded in the trnK tRNA gene intron. Probably assists in splicing its own and other chloroplast group II introns. The chain is Maturase K from Lathyrus tingitanus (Tangier pea).